The primary structure comprises 216 residues: Ras-related protein RabN1 (216 aa).

15–22 (GDYNSGKT) contributes to the GTP binding site. Residues 37–44 (TCPSTFDL) carry the Effector region motif. Residues 62-66 (DTAGQ) and 128-131 (TKSD) each bind GTP. C216 is lipidated: S-geranylgeranyl cysteine.

The protein belongs to the small GTPase superfamily. Rab family.

Its subcellular location is the cell membrane. The protein is Ras-related protein RabN1 (rabN1) of Dictyostelium discoideum (Social amoeba).